A 227-amino-acid chain; its full sequence is Cytochrome c oxidase subunit 2 (227 aa).

Over 1-14 (MAYPFQLGLQDATS) the chain is Mitochondrial intermembrane. A helical membrane pass occupies residues 15 to 45 (PIMEELLHFHDHTLMIVFLISSLVLYIISSM). Residues 46-59 (LTTKLTHTSTMDAQ) lie on the Mitochondrial matrix side of the membrane. A helical transmembrane segment spans residues 60–87 (EVETVWTILPAIILVLIALPSLRILYMM). Residues 88-227 (DETNNPSLTV…YFETWSALMV (140 aa)) are Mitochondrial intermembrane-facing. Positions 161, 196, 198, 200, 204, and 207 each coordinate Cu cation. Glutamate 198 is a Mg(2+) binding site. Tyrosine 218 bears the Phosphotyrosine mark.

The protein belongs to the cytochrome c oxidase subunit 2 family. Component of the cytochrome c oxidase (complex IV, CIV), a multisubunit enzyme composed of 14 subunits. The complex is composed of a catalytic core of 3 subunits MT-CO1, MT-CO2 and MT-CO3, encoded in the mitochondrial DNA, and 11 supernumerary subunits COX4I, COX5A, COX5B, COX6A, COX6B, COX6C, COX7A, COX7B, COX7C, COX8 and NDUFA4, which are encoded in the nuclear genome. The complex exists as a monomer or a dimer and forms supercomplexes (SCs) in the inner mitochondrial membrane with NADH-ubiquinone oxidoreductase (complex I, CI) and ubiquinol-cytochrome c oxidoreductase (cytochrome b-c1 complex, complex III, CIII), resulting in different assemblies (supercomplex SCI(1)III(2)IV(1) and megacomplex MCI(2)III(2)IV(2)). Found in a complex with TMEM177, COA6, COX18, COX20, SCO1 and SCO2. Interacts with TMEM177 in a COX20-dependent manner. Interacts with COX20. Interacts with COX16. It depends on Cu cation as a cofactor.

The protein resides in the mitochondrion inner membrane. It catalyses the reaction 4 Fe(II)-[cytochrome c] + O2 + 8 H(+)(in) = 4 Fe(III)-[cytochrome c] + 2 H2O + 4 H(+)(out). Component of the cytochrome c oxidase, the last enzyme in the mitochondrial electron transport chain which drives oxidative phosphorylation. The respiratory chain contains 3 multisubunit complexes succinate dehydrogenase (complex II, CII), ubiquinol-cytochrome c oxidoreductase (cytochrome b-c1 complex, complex III, CIII) and cytochrome c oxidase (complex IV, CIV), that cooperate to transfer electrons derived from NADH and succinate to molecular oxygen, creating an electrochemical gradient over the inner membrane that drives transmembrane transport and the ATP synthase. Cytochrome c oxidase is the component of the respiratory chain that catalyzes the reduction of oxygen to water. Electrons originating from reduced cytochrome c in the intermembrane space (IMS) are transferred via the dinuclear copper A center (CU(A)) of subunit 2 and heme A of subunit 1 to the active site in subunit 1, a binuclear center (BNC) formed by heme A3 and copper B (CU(B)). The BNC reduces molecular oxygen to 2 water molecules using 4 electrons from cytochrome c in the IMS and 4 protons from the mitochondrial matrix. This chain is Cytochrome c oxidase subunit 2 (MT-CO2), found in Chrysocyon brachyurus (Maned wolf).